Reading from the N-terminus, the 210-residue chain is Proteasome subunit beta (210 aa).

Residues 1 to 9 constitute a propeptide, removed in mature form; by autocatalysis; that stretch reads MDNDKHLKG. Thr10 serves as the catalytic Nucleophile.

It belongs to the peptidase T1B family. As to quaternary structure, the 20S proteasome core is composed of 14 alpha and 14 beta subunits that assemble into four stacked heptameric rings, resulting in a barrel-shaped structure. The two inner rings, each composed of seven catalytic beta subunits, are sandwiched by two outer rings, each composed of seven alpha subunits. The catalytic chamber with the active sites is on the inside of the barrel. Has a gated structure, the ends of the cylinder being occluded by the N-termini of the alpha-subunits. Is capped at one or both ends by the proteasome regulatory ATPase, PAN.

It is found in the cytoplasm. It catalyses the reaction Cleavage of peptide bonds with very broad specificity.. The formation of the proteasomal ATPase PAN-20S proteasome complex, via the docking of the C-termini of PAN into the intersubunit pockets in the alpha-rings, triggers opening of the gate for substrate entry. Interconversion between the open-gate and close-gate conformations leads to a dynamic regulation of the 20S proteasome proteolysis activity. Its function is as follows. Component of the proteasome core, a large protease complex with broad specificity involved in protein degradation. The protein is Proteasome subunit beta of Methanococcoides burtonii (strain DSM 6242 / NBRC 107633 / OCM 468 / ACE-M).